A 297-amino-acid polypeptide reads, in one-letter code: UDP-N-acetylenolpyruvoylglucosamine reductase (297 aa).

One can recognise an FAD-binding PCMH-type domain in the interval 24–189 (KVGGNAEIFF…LKAIFKVNKG (166 aa)). R169 is an active-site residue. The Proton donor role is filled by S218. The active site involves E289.

It belongs to the MurB family. The cofactor is FAD.

Its subcellular location is the cytoplasm. The enzyme catalyses UDP-N-acetyl-alpha-D-muramate + NADP(+) = UDP-N-acetyl-3-O-(1-carboxyvinyl)-alpha-D-glucosamine + NADPH + H(+). The protein operates within cell wall biogenesis; peptidoglycan biosynthesis. Functionally, cell wall formation. The polypeptide is UDP-N-acetylenolpyruvoylglucosamine reductase (Rickettsia canadensis (strain McKiel)).